Here is a 469-residue protein sequence, read N- to C-terminus: Proline--tRNA ligase (469 aa).

Belongs to the class-II aminoacyl-tRNA synthetase family. ProS type 3 subfamily. As to quaternary structure, homodimer.

Its subcellular location is the cytoplasm. It catalyses the reaction tRNA(Pro) + L-proline + ATP = L-prolyl-tRNA(Pro) + AMP + diphosphate. In terms of biological role, catalyzes the attachment of proline to tRNA(Pro) in a two-step reaction: proline is first activated by ATP to form Pro-AMP and then transferred to the acceptor end of tRNA(Pro). The protein is Proline--tRNA ligase of Methanosphaera stadtmanae (strain ATCC 43021 / DSM 3091 / JCM 11832 / MCB-3).